Here is a 386-residue protein sequence, read N- to C-terminus: S-adenosylmethionine synthase (386 aa).

ATP is bound at residue His14. Asp16 provides a ligand contact to Mg(2+). Glu42 is a binding site for K(+). Positions 55 and 98 each coordinate L-methionine. Positions 98 to 108 (QSGDISQGVDG) are flexible loop. Residues 162-164 (DSK), 230-231 (RF), Asp239, 245-246 (RK), Ala262, and Lys266 each bind ATP. Residue Asp239 participates in L-methionine binding. Residue Lys270 participates in L-methionine binding.

It belongs to the AdoMet synthase family. Homotetramer; dimer of dimers. Requires Mg(2+) as cofactor. The cofactor is K(+).

Its subcellular location is the cytoplasm. It catalyses the reaction L-methionine + ATP + H2O = S-adenosyl-L-methionine + phosphate + diphosphate. It functions in the pathway amino-acid biosynthesis; S-adenosyl-L-methionine biosynthesis; S-adenosyl-L-methionine from L-methionine: step 1/1. Catalyzes the formation of S-adenosylmethionine (AdoMet) from methionine and ATP. The overall synthetic reaction is composed of two sequential steps, AdoMet formation and the subsequent tripolyphosphate hydrolysis which occurs prior to release of AdoMet from the enzyme. This is S-adenosylmethionine synthase from Salinibacter ruber (strain DSM 13855 / M31).